Here is a 277-residue protein sequence, read N- to C-terminus: Phosphate import ATP-binding protein PstB 1 (277 aa).

The ABC transporter domain occupies 27 to 272; the sequence is LRVRDLAVSY…PSHELTAAYI (246 aa). 59–66 is a binding site for ATP; it reads GPSGCGKT.

The protein belongs to the ABC transporter superfamily. Phosphate importer (TC 3.A.1.7) family. In terms of assembly, the complex is composed of two ATP-binding proteins (PstB), two transmembrane proteins (PstC and PstA) and a solute-binding protein (PstS).

The protein localises to the cell inner membrane. The catalysed reaction is phosphate(out) + ATP + H2O = ADP + 2 phosphate(in) + H(+). Part of the ABC transporter complex PstSACB involved in phosphate import. Responsible for energy coupling to the transport system. The protein is Phosphate import ATP-binding protein PstB 1 of Nitrosococcus oceani (strain ATCC 19707 / BCRC 17464 / JCM 30415 / NCIMB 11848 / C-107).